The sequence spans 366 residues: NADH-quinone oxidoreductase subunit D (366 aa).

This sequence belongs to the complex I 49 kDa subunit family. As to quaternary structure, NDH-1 is composed of 14 different subunits. Subunits NuoB, C, D, E, F, and G constitute the peripheral sector of the complex.

Its subcellular location is the cell membrane. The enzyme catalyses a quinone + NADH + 5 H(+)(in) = a quinol + NAD(+) + 4 H(+)(out). NDH-1 shuttles electrons from NADH, via FMN and iron-sulfur (Fe-S) centers, to quinones in the respiratory chain. The immediate electron acceptor for the enzyme in this species is believed to be a menaquinone. Couples the redox reaction to proton translocation (for every two electrons transferred, four hydrogen ions are translocated across the cytoplasmic membrane), and thus conserves the redox energy in a proton gradient. The chain is NADH-quinone oxidoreductase subunit D from Bacillus cereus (strain ZK / E33L).